The following is a 139-amino-acid chain: Large ribosomal subunit protein bL17 (139 aa).

The protein belongs to the bacterial ribosomal protein bL17 family. Part of the 50S ribosomal subunit. Contacts protein L32.

This is Large ribosomal subunit protein bL17 from Afipia carboxidovorans (strain ATCC 49405 / DSM 1227 / KCTC 32145 / OM5) (Oligotropha carboxidovorans).